A 372-amino-acid chain; its full sequence is Nucleosome assembly protein 1;1 (372 aa).

Residues valine 26 to glutamate 80 adopt a coiled-coil conformation. Serine 41 bears the Phosphoserine mark. Residues leucine 47–glutamine 62 carry the Nuclear export signal motif. Positions lysine 223–lysine 228 match the Nuclear localization signal motif. The tract at residues alanine 299 to glutamine 372 is disordered. Residues methionine 300 to glutamate 337 show a composition bias toward acidic residues. Positions glycine 360–glutamine 372 are enriched in basic and acidic residues. Cysteine methyl ester is present on cysteine 369. Residue cysteine 369 is the site of S-farnesyl cysteine attachment. The propeptide at lysine 370–glutamine 372 is removed in mature form.

This sequence belongs to the nucleosome assembly protein (NAP) family. As to quaternary structure, can form homomeric and heteromeric protein complexes with NAP1;2, NAP1;3 and NAP1;4. Binds histone H2A. Interacts with PP438/PNM1. Post-translationally, prenylation of the protein is required for its function during the cell proliferation phase of leaf development. In terms of tissue distribution, ubiquitous.

The protein localises to the nucleus. It is found in the cytoplasm. Its function is as follows. May modulate chromatin structure by regulation of nucleosome assembly/disassembly. Contributes to the regulation of cell proliferation and cell expansion. May function in nucleotide excision repair (NER). Involved in somatic homologous recombination. This chain is Nucleosome assembly protein 1;1 (NAP1;1), found in Arabidopsis thaliana (Mouse-ear cress).